The chain runs to 95 residues: Co-chaperonin GroES (95 aa).

Belongs to the GroES chaperonin family. As to quaternary structure, heptamer of 7 subunits arranged in a ring. Interacts with the chaperonin GroEL.

The protein localises to the cytoplasm. Its function is as follows. Together with the chaperonin GroEL, plays an essential role in assisting protein folding. The GroEL-GroES system forms a nano-cage that allows encapsulation of the non-native substrate proteins and provides a physical environment optimized to promote and accelerate protein folding. GroES binds to the apical surface of the GroEL ring, thereby capping the opening of the GroEL channel. This is Co-chaperonin GroES from Bordetella petrii (strain ATCC BAA-461 / DSM 12804 / CCUG 43448).